A 571-amino-acid polypeptide reads, in one-letter code: Hsp70-Hsp90 organizing protein 2 (571 aa).

TPR repeat units follow at residues 2–35, 37–69, and 70–103; these read ADEA…TPTN, VLFS…KPDW, and GKGY…DPSN. A disordered region spans residues 117–137; sequence ASRSRASAPNPFGDAFQGPEM. The STI1 1 domain maps to 134-173; it reads GPEMWSKLTADPSTRGLLKQPDFVNMMKEIQRNPSNLNLY. At Ser-168 the chain carries Phosphoserine. The span at 198–207 shows a compositional bias: acidic residues; it reads DDMEIGEEEM. Positions 198–245 are disordered; that stretch reads DDMEIGEEEMAVPSRKEPEVEKKRKPEPEPEPEPEFGEEKQKKLKAQK. 2 stretches are compositionally biased toward basic and acidic residues: residues 211-225 and 234-245; these read SRKE…KPEP and GEEKQKKLKAQK. The Bipartite nuclear localization signal signature appears at 240–257; that stretch reads KLKAQKEKELGNAAYKKK. TPR repeat units lie at residues 243 to 276, 278 to 310, 322 to 355, 382 to 415, 417 to 449, and 450 to 483; these read AQKE…DDED, SYIT…GREL, TRKG…HRNP, GDEE…NPKD, RAYS…DPTF, and LKGY…DPNN. The STI1 2 domain occupies 520–559; that stretch reads DPEIQNILTDPVMRQVLSDLQENPAAAQKHMQNPMIMNKI.

As to quaternary structure, co-chaperone that forms a complex with HSP70 and HSP90 and preproteins (e.g. chloroplast preproteins). Phosphorylated. In terms of processing, acetylated.

Its subcellular location is the cytoplasm. It localises to the nucleus. Functionally, mediates the association of the molecular chaperones HSP70 and HSP90. Mediates nuclear encoded chloroplast preproteins binding to HSP90 prior to chloroplastic sorting. In Arabidopsis thaliana (Mouse-ear cress), this protein is Hsp70-Hsp90 organizing protein 2 (HOP2).